Reading from the N-terminus, the 162-residue chain is Putative ureidoglycolate lyase (162 aa).

This sequence belongs to the ureidoglycolate lyase family. Homodimer. It depends on Ni(2+) as a cofactor.

The enzyme catalyses (S)-ureidoglycolate = urea + glyoxylate. The protein operates within nitrogen metabolism; (S)-allantoin degradation. In terms of biological role, catalyzes the catabolism of the allantoin degradation intermediate (S)-ureidoglycolate, generating urea and glyoxylate. Involved in the utilization of allantoin as nitrogen source. This chain is Putative ureidoglycolate lyase, found in Agrobacterium fabrum (strain C58 / ATCC 33970) (Agrobacterium tumefaciens (strain C58)).